We begin with the raw amino-acid sequence, 660 residues long: Bifunctional polymyxin resistance protein ArnA (660 aa).

The tract at residues 1 to 304 is formyltransferase ArnAFT; the sequence is MKTVVFAYHD…TLGLVQGSRL (304 aa). Residue 86 to 88 participates in (6R)-10-formyltetrahydrofolate binding; that stretch reads HLI. Histidine 104 serves as the catalytic Proton donor; for formyltransferase activity. (6R)-10-formyltetrahydrofolate-binding positions include arginine 114 and 136 to 140; that span reads VKRAD. Residues 314 to 660 are dehydrogenase ArnADH; sequence RRTRVLILGV…RTVDLTDKPS (347 aa). NAD(+) contacts are provided by residues aspartate 347 and 368–369; that span reads DI. UDP-alpha-D-glucuronate contacts are provided by residues alanine 393, tyrosine 398, and 432 to 433; that span reads TS. Glutamate 434 (proton acceptor; for decarboxylase activity) is an active-site residue. UDP-alpha-D-glucuronate is bound by residues arginine 460, asparagine 492, 526-535, and tyrosine 613; that span reads KLIDGGKQKR. Arginine 619 serves as the catalytic Proton donor; for decarboxylase activity.

It in the N-terminal section; belongs to the Fmt family. UDP-L-Ara4N formyltransferase subfamily. In the C-terminal section; belongs to the NAD(P)-dependent epimerase/dehydratase family. UDP-glucuronic acid decarboxylase subfamily. Homohexamer, formed by a dimer of trimers.

The enzyme catalyses UDP-alpha-D-glucuronate + NAD(+) = UDP-beta-L-threo-pentopyranos-4-ulose + CO2 + NADH. It carries out the reaction UDP-4-amino-4-deoxy-beta-L-arabinose + (6R)-10-formyltetrahydrofolate = UDP-4-deoxy-4-formamido-beta-L-arabinose + (6S)-5,6,7,8-tetrahydrofolate + H(+). It functions in the pathway nucleotide-sugar biosynthesis; UDP-4-deoxy-4-formamido-beta-L-arabinose biosynthesis; UDP-4-deoxy-4-formamido-beta-L-arabinose from UDP-alpha-D-glucuronate: step 1/3. Its pathway is nucleotide-sugar biosynthesis; UDP-4-deoxy-4-formamido-beta-L-arabinose biosynthesis; UDP-4-deoxy-4-formamido-beta-L-arabinose from UDP-alpha-D-glucuronate: step 3/3. The protein operates within bacterial outer membrane biogenesis; lipopolysaccharide biosynthesis. Functionally, bifunctional enzyme that catalyzes the oxidative decarboxylation of UDP-glucuronic acid (UDP-GlcUA) to UDP-4-keto-arabinose (UDP-Ara4O) and the addition of a formyl group to UDP-4-amino-4-deoxy-L-arabinose (UDP-L-Ara4N) to form UDP-L-4-formamido-arabinose (UDP-L-Ara4FN). The modified arabinose is attached to lipid A and is required for resistance to polymyxin and cationic antimicrobial peptides. The polypeptide is Bifunctional polymyxin resistance protein ArnA (Escherichia coli O17:K52:H18 (strain UMN026 / ExPEC)).